Here is a 781-residue protein sequence, read N- to C-terminus: Protein translocase subunit SecA 2 (781 aa).

Residues Q85, 103-107 (GEGKT), and D491 each bind ATP.

It belongs to the SecA family. In terms of assembly, monomer and homodimer. Part of the essential Sec protein translocation apparatus which comprises SecA, SecYEG and auxiliary proteins SecDF. Other proteins may also be involved.

It localises to the cell membrane. It is found in the cytoplasm. It carries out the reaction ATP + H2O + cellular proteinSide 1 = ADP + phosphate + cellular proteinSide 2.. Part of the Sec protein translocase complex. Interacts with the SecYEG preprotein conducting channel. Has a central role in coupling the hydrolysis of ATP to the transfer of proteins into and across the cell membrane, serving as an ATP-driven molecular motor driving the stepwise translocation of polypeptide chains across the membrane. The polypeptide is Protein translocase subunit SecA 2 (Clostridioides difficile (strain 630) (Peptoclostridium difficile)).